Here is a 74-residue protein sequence, read N- to C-terminus: Conotoxin MiK41 (74 aa).

The N-terminal stretch at 1–22 (MKLTCVLIITVLFLTACQLTTA) is a signal peptide. A propeptide spanning residues 23–45 (VTYSRGEHKHRALMSTGTNYRLP) is cleaved from the precursor. 3 cysteine pairs are disulfide-bonded: C48–C62, C55–C66, and C61–C73.

It belongs to the conotoxin O1 superfamily. Expressed by the venom duct.

It is found in the secreted. This Conus miles (Soldier cone) protein is Conotoxin MiK41.